Consider the following 27-residue polypeptide: Superoxide dismutase [Mn] (27 aa).

Belongs to the iron/manganese superoxide dismutase family. In terms of assembly, homodimer. The cofactor is Mn(2+).

It carries out the reaction 2 superoxide + 2 H(+) = H2O2 + O2. Its function is as follows. Destroys superoxide anion radicals which are normally produced within the cells and which are toxic to biological systems. In Desulfovibrio desulfuricans, this protein is Superoxide dismutase [Mn] (sodA).